Consider the following 514-residue polypeptide: Uronyl 2-sulfotransferase homolog pip (514 aa).

At 1–30 the chain is on the cytoplasmic side; it reads MSLNAERSYKMKLRDVENAFKYRRIPYPKR. The chain crosses the membrane as a helical; Signal-anchor for type II membrane protein span at residues 31–50; sequence SVELIALLAISCTFFLFMHT. Residues 51–514 lie on the Lumenal side of the membrane; it reads NKLNSRLKEM…EQQNEYNEDY (464 aa). A compositionally biased stretch (basic and acidic residues) spans 112–121; sequence HDRRSSEEQL. Positions 112-185 are disordered; sequence HDRRSSEEQL…DEDEVEENDD (74 aa). The span at 127–140 shows a compositional bias: basic residues; sequence HGHHHDHHSHHHHM. A compositionally biased stretch (basic and acidic residues) spans 155 to 170; the sequence is HDKQLAVPDNKHKEDE. Residues 171-185 show a composition bias toward acidic residues; the sequence is VHYEDDEDEVEENDD. The N-linked (GlcNAc...) asparagine glycan is linked to asparagine 207. Histidine 282 is a catalytic residue. N-linked (GlcNAc...) asparagine glycans are attached at residues asparagine 287, asparagine 416, asparagine 451, and asparagine 467.

The protein belongs to the sulfotransferase 3 family. As to quaternary structure, interacts with wbl/windbeutel; the interaction is direct and does not require pip to be folded. As to expression, ovary-specific. Specifically expressed in the ventral follicle cells of stage 9-10 egg chambers. Expressed in ovaries. Specifically expressed in the ventral follicle cells of stage 9-10 egg chambers.

It is found in the golgi apparatus membrane. Functionally, sulfotransferase involved in dorsoventral axis patterning in early embryos. Required for the ventral activation of ea/easter by the protease snk in the perivitelline space between the embryonic membrane and the eggshell; activation of ea requires both activation of the ndl-gd-snk protease cascade and sulfation of a vitelline membrane component by pip. Probably acts by mediating the sulfation of some glycoprotein or glycosaminoglycan stably deposited in the vitelline membrane, whose ventrally localized modification leads to spatially restricted activation of the protease cascade resulting in localized activation of the spz Toll receptor ligand by ea. Probably required redundantly with isoform H for dorsoventral axis patterning in embryos. Lacks 2-O-sulfotransferase activity towards completely desulfated N-sulfated (CDSNS) heparin, chondroitin, and chondroitin sulfate A, B (dermatan sulfate), and C. Sulfates several components of the eggshell vitelline membrane, including Vml, Vm26Aa, Vm32E and psd/palisade/Fcp26Aa. Its function is as follows. Probably required redundantly with isoform A for dorsoventral axis patterning in embryos. In terms of biological role, lacks 2-O-sulfotransferase activity towards CDSNS heparin, chondroitin, and chondroitin sulfate A, B (dermatan sulfate), and C. This is Uronyl 2-sulfotransferase homolog pip from Drosophila melanogaster (Fruit fly).